A 485-amino-acid chain; its full sequence is UDP-N-acetylmuramate--L-alanine ligase (485 aa).

120–126 (GSHGKTT) is an ATP binding site.

This sequence belongs to the MurCDEF family.

Its subcellular location is the cytoplasm. It catalyses the reaction UDP-N-acetyl-alpha-D-muramate + L-alanine + ATP = UDP-N-acetyl-alpha-D-muramoyl-L-alanine + ADP + phosphate + H(+). It participates in cell wall biogenesis; peptidoglycan biosynthesis. In terms of biological role, cell wall formation. This Rickettsia conorii (strain ATCC VR-613 / Malish 7) protein is UDP-N-acetylmuramate--L-alanine ligase.